The following is a 1213-amino-acid chain: DNA-directed RNA polymerase subunit beta' (1213 aa).

Zn(2+) contacts are provided by cysteine 60, cysteine 62, cysteine 75, and cysteine 78. Mg(2+) contacts are provided by aspartate 450, aspartate 452, and aspartate 454. 4 residues coordinate Zn(2+): cysteine 819, cysteine 893, cysteine 900, and cysteine 903.

Belongs to the RNA polymerase beta' chain family. The RNAP catalytic core consists of 2 alpha, 1 beta, 1 beta' and 1 omega subunit. When a sigma factor is associated with the core the holoenzyme is formed, which can initiate transcription. It depends on Mg(2+) as a cofactor. Requires Zn(2+) as cofactor.

It carries out the reaction RNA(n) + a ribonucleoside 5'-triphosphate = RNA(n+1) + diphosphate. In terms of biological role, DNA-dependent RNA polymerase catalyzes the transcription of DNA into RNA using the four ribonucleoside triphosphates as substrates. The protein is DNA-directed RNA polymerase subunit beta' of Streptococcus pyogenes serotype M2 (strain MGAS10270).